The sequence spans 219 residues: Holliday junction branch migration complex subunit RuvA (219 aa).

Residues 1–66 are domain I; it reads MIEYIIGKIS…NFLFEYYGFK (66 aa). The tract at residues 67 to 148 is domain II; the sequence is TLREKIFFEN…SEYNNDVNHS (82 aa). The segment at 149–154 is flexible linker; sequence SINQQS. The segment at 155–219 is domain III; that stretch reads NSYNPVPDLV…EAVTNKTTVS (65 aa).

This sequence belongs to the RuvA family. As to quaternary structure, homotetramer. Forms an RuvA(8)-RuvB(12)-Holliday junction (HJ) complex. HJ DNA is sandwiched between 2 RuvA tetramers; dsDNA enters through RuvA and exits via RuvB. An RuvB hexamer assembles on each DNA strand where it exits the tetramer. Each RuvB hexamer is contacted by two RuvA subunits (via domain III) on 2 adjacent RuvB subunits; this complex drives branch migration. In the full resolvosome a probable DNA-RuvA(4)-RuvB(12)-RuvC(2) complex forms which resolves the HJ.

The protein localises to the cytoplasm. The RuvA-RuvB-RuvC complex processes Holliday junction (HJ) DNA during genetic recombination and DNA repair, while the RuvA-RuvB complex plays an important role in the rescue of blocked DNA replication forks via replication fork reversal (RFR). RuvA specifically binds to HJ cruciform DNA, conferring on it an open structure. The RuvB hexamer acts as an ATP-dependent pump, pulling dsDNA into and through the RuvAB complex. HJ branch migration allows RuvC to scan DNA until it finds its consensus sequence, where it cleaves and resolves the cruciform DNA. This Malacoplasma penetrans (strain HF-2) (Mycoplasma penetrans) protein is Holliday junction branch migration complex subunit RuvA.